A 193-amino-acid chain; its full sequence is Small ribosomal subunit protein eS1 (193 aa).

The protein belongs to the eukaryotic ribosomal protein eS1 family.

This Methanobrevibacter smithii (strain ATCC 35061 / DSM 861 / OCM 144 / PS) protein is Small ribosomal subunit protein eS1.